We begin with the raw amino-acid sequence, 233 residues long: Phosphoribosylformylglycinamidine synthase subunit PurQ (233 aa).

Residues 3 to 233 (AAILVFPGIN…GLAQHLEKAA (231 aa)) enclose the Glutamine amidotransferase type-1 domain. Cys-87 serves as the catalytic Nucleophile. Active-site residues include His-204 and Glu-206.

In terms of assembly, part of the FGAM synthase complex composed of 1 PurL, 1 PurQ and 2 PurS subunits.

Its subcellular location is the cytoplasm. It catalyses the reaction N(2)-formyl-N(1)-(5-phospho-beta-D-ribosyl)glycinamide + L-glutamine + ATP + H2O = 2-formamido-N(1)-(5-O-phospho-beta-D-ribosyl)acetamidine + L-glutamate + ADP + phosphate + H(+). The catalysed reaction is L-glutamine + H2O = L-glutamate + NH4(+). It participates in purine metabolism; IMP biosynthesis via de novo pathway; 5-amino-1-(5-phospho-D-ribosyl)imidazole from N(2)-formyl-N(1)-(5-phospho-D-ribosyl)glycinamide: step 1/2. In terms of biological role, part of the phosphoribosylformylglycinamidine synthase complex involved in the purines biosynthetic pathway. Catalyzes the ATP-dependent conversion of formylglycinamide ribonucleotide (FGAR) and glutamine to yield formylglycinamidine ribonucleotide (FGAM) and glutamate. The FGAM synthase complex is composed of three subunits. PurQ produces an ammonia molecule by converting glutamine to glutamate. PurL transfers the ammonia molecule to FGAR to form FGAM in an ATP-dependent manner. PurS interacts with PurQ and PurL and is thought to assist in the transfer of the ammonia molecule from PurQ to PurL. This is Phosphoribosylformylglycinamidine synthase subunit PurQ from Bradyrhizobium diazoefficiens (strain JCM 10833 / BCRC 13528 / IAM 13628 / NBRC 14792 / USDA 110).